A 294-amino-acid polypeptide reads, in one-letter code: Cytidine deaminase (294 aa).

2 CMP/dCMP-type deaminase domains span residues 48–168 (DEDA…FGPK) and 186–294 (LTGD…VLLA). Residue 89 to 91 (NME) participates in substrate binding. H102 contacts Zn(2+). E104 functions as the Proton donor in the catalytic mechanism. Residues C129 and C132 each contribute to the Zn(2+) site.

It belongs to the cytidine and deoxycytidylate deaminase family. In terms of assembly, homodimer. Zn(2+) is required as a cofactor.

It catalyses the reaction cytidine + H2O + H(+) = uridine + NH4(+). The catalysed reaction is 2'-deoxycytidine + H2O + H(+) = 2'-deoxyuridine + NH4(+). In terms of biological role, this enzyme scavenges exogenous and endogenous cytidine and 2'-deoxycytidine for UMP synthesis. In Shigella dysenteriae serotype 1 (strain Sd197), this protein is Cytidine deaminase.